The sequence spans 22 residues: Fuctinin-1 (22 aa).

A disordered region spans residues 1–22; it reads SASPGLPKGEKEQQEAIEHIDE. Residues 8–22 are compositionally biased toward basic and acidic residues; it reads KGEKEQQEAIEHIDE.

To human SET/PHAPII protein. As to quaternary structure, oligomer.

The protein localises to the cytoplasm. Its function is as follows. Has a role in the physiological regulation of fucosylation processes. The polypeptide is Fuctinin-1 (Rattus norvegicus (Rat)).